The sequence spans 256 residues: Type III pantothenate kinase (256 aa).

7–14 (DIGNTNVV) contributes to the ATP binding site. 108 to 111 (GADC) contributes to the substrate binding site. The active-site Proton acceptor is the Asp110. Asp130 contributes to the K(+) binding site. An ATP-binding site is contributed by Thr133. Substrate is bound at residue Thr185.

This sequence belongs to the type III pantothenate kinase family. As to quaternary structure, homodimer. Requires NH4(+) as cofactor. K(+) is required as a cofactor.

It is found in the cytoplasm. It carries out the reaction (R)-pantothenate + ATP = (R)-4'-phosphopantothenate + ADP + H(+). Its pathway is cofactor biosynthesis; coenzyme A biosynthesis; CoA from (R)-pantothenate: step 1/5. Catalyzes the phosphorylation of pantothenate (Pan), the first step in CoA biosynthesis. The sequence is that of Type III pantothenate kinase from Bifidobacterium adolescentis (strain ATCC 15703 / DSM 20083 / NCTC 11814 / E194a).